Consider the following 461-residue polypeptide: 3-oxoacyl-[acyl-carrier-protein] synthase, mitochondrial (461 aa).

The transit peptide at 1-28 (MATSNLRRHLSASRLRLNRFISTSSSYH) directs the protein to the mitochondrion. The Ketosynthase family 3 (KS3) domain maps to 30–460 (HRRVVVTGLG…GTNASLLFAS (431 aa)). Residues Cys209, His350, and His389 each act as for beta-ketoacyl synthase activity in the active site.

This sequence belongs to the thiolase-like superfamily. Beta-ketoacyl-ACP synthases family. Homodimer. In terms of tissue distribution, expressed at the same level in leaves, roots, siliques and flowers.

It localises to the mitochondrion. It catalyses the reaction a fatty acyl-[ACP] + malonyl-[ACP] + H(+) = a 3-oxoacyl-[ACP] + holo-[ACP] + CO2. It carries out the reaction butanoyl-[ACP] + malonyl-[ACP] + H(+) = 3-oxohexanoyl-[ACP] + holo-[ACP] + CO2. The catalysed reaction is hexanoyl-[ACP] + malonyl-[ACP] + H(+) = 3-oxooctanoyl-[ACP] + holo-[ACP] + CO2. The enzyme catalyses octanoyl-[ACP] + malonyl-[ACP] + H(+) = 3-oxodecanoyl-[ACP] + holo-[ACP] + CO2. It catalyses the reaction decanoyl-[ACP] + malonyl-[ACP] + H(+) = 3-oxododecanoyl-[ACP] + holo-[ACP] + CO2. It carries out the reaction dodecanoyl-[ACP] + malonyl-[ACP] + H(+) = 3-oxotetradecanoyl-[ACP] + holo-[ACP] + CO2. The catalysed reaction is tetradecanoyl-[ACP] + malonyl-[ACP] + H(+) = 3-oxohexadecanoyl-[ACP] + holo-[ACP] + CO2. The enzyme catalyses hexadecanoyl-[ACP] + malonyl-[ACP] + H(+) = 3-oxooctadecanoyl-[ACP] + holo-[ACP] + CO2. Its pathway is lipid metabolism; fatty acid biosynthesis. Inhibited by cerulenin. Its function is as follows. Catalyzes all the condensation reaction of fatty acid synthesis by the addition to an acyl acceptor of two carbons from malonyl-ACP. Able to elongate saturated acyl chains from 4 to at least 16 carbons. Uses malonyl-CoA but not acetyl-CoA as primer substrate. When expressed in a heterologous system, reveals a bimodal distribution of products, with peaks at C8 and C14-C16. The major product of the reaction (octanoyl-ACP) is required for the lipoylation of essential mitochondrial proteins. Required for mitochondrial fatty acid synthesis (mtFAS). MtFAS are essential for photorespiration and plant development, probably by influencing mitochondrial membrane lipid composition and other lipid metabolic pathways. The protein is 3-oxoacyl-[acyl-carrier-protein] synthase, mitochondrial of Arabidopsis thaliana (Mouse-ear cress).